The chain runs to 118 residues: 5-hydroxyisourate hydrolase (118 aa).

H11, R51, and Y115 together coordinate substrate.

It belongs to the transthyretin family. 5-hydroxyisourate hydrolase subfamily. Homotetramer.

The protein resides in the peroxisome. It catalyses the reaction 5-hydroxyisourate + H2O = 5-hydroxy-2-oxo-4-ureido-2,5-dihydro-1H-imidazole-5-carboxylate + H(+). The protein operates within purine metabolism; urate degradation; (S)-allantoin from urate: step 2/3. Its function is as follows. Catalyzes the hydrolysis of 5-hydroxyisourate (HIU) to 2-oxo-4-hydroxy-4-carboxy-5-ureidoimidazoline (OHCU). In Mus musculus (Mouse), this protein is 5-hydroxyisourate hydrolase (Urah).